Here is a 164-residue protein sequence, read N- to C-terminus: SsrA-binding protein (164 aa).

Belongs to the SmpB family.

Its subcellular location is the cytoplasm. Required for rescue of stalled ribosomes mediated by trans-translation. Binds to transfer-messenger RNA (tmRNA), required for stable association of tmRNA with ribosomes. tmRNA and SmpB together mimic tRNA shape, replacing the anticodon stem-loop with SmpB. tmRNA is encoded by the ssrA gene; the 2 termini fold to resemble tRNA(Ala) and it encodes a 'tag peptide', a short internal open reading frame. During trans-translation Ala-aminoacylated tmRNA acts like a tRNA, entering the A-site of stalled ribosomes, displacing the stalled mRNA. The ribosome then switches to translate the ORF on the tmRNA; the nascent peptide is terminated with the 'tag peptide' encoded by the tmRNA and targeted for degradation. The ribosome is freed to recommence translation, which seems to be the essential function of trans-translation. This Shewanella sediminis (strain HAW-EB3) protein is SsrA-binding protein.